The sequence spans 394 residues: ATP phosphoribosyltransferase regulatory subunit (394 aa).

Belongs to the class-II aminoacyl-tRNA synthetase family. HisZ subfamily. In terms of assembly, heteromultimer composed of HisG and HisZ subunits.

It is found in the cytoplasm. It functions in the pathway amino-acid biosynthesis; L-histidine biosynthesis; L-histidine from 5-phospho-alpha-D-ribose 1-diphosphate: step 1/9. Its function is as follows. Required for the first step of histidine biosynthesis. May allow the feedback regulation of ATP phosphoribosyltransferase activity by histidine. The sequence is that of ATP phosphoribosyltransferase regulatory subunit from Teredinibacter turnerae (strain ATCC 39867 / T7901).